A 1879-amino-acid polypeptide reads, in one-letter code: Protein TIC 214 (1879 aa).

6 consecutive transmembrane segments (helical) span residues 18–38 (IINSVVVVGLYYGFLTTFSIG), 64–84 (FITGQLMMFISIYYAPLHLAL), 87–107 (PYTITVLALPYLLFHFFWTNP), 124–144 (LSIQCVFLNNLIFQLFNHFIL), 172–192 (VGWLIGHILFMKSVGLILVWI), and 218–238 (IAPIFSIILFITWVYYLGRIP). Disordered stretches follow at residues 245 to 305 (ETSK…IDET) and 586 to 702 (ISTS…DEPM). 2 stretches are compositionally biased toward acidic residues: residues 253 to 268 (AETEESEEETDVEIET) and 295 to 305 (EKEDPDKIDET). Low complexity predominate over residues 586-688 (ISTSTPTSTP…SIPASTSTST (103 aa)). A compositionally biased stretch (basic and acidic residues) spans 691–701 (IKSKDEPKDEP).

Belongs to the TIC214 family. As to quaternary structure, part of the Tic complex.

Its subcellular location is the plastid. It is found in the chloroplast inner membrane. In terms of biological role, involved in protein precursor import into chloroplasts. May be part of an intermediate translocation complex acting as a protein-conducting channel at the inner envelope. This chain is Protein TIC 214, found in Cucumis sativus (Cucumber).